We begin with the raw amino-acid sequence, 1435 residues long: Nitric oxide synthase 1 (1435 aa).

Residues Met1–Leu206 form an interaction with NOSIP region. The region spanning Ser17–Gly99 is the PDZ domain. Disordered regions lie at residues Thr110–Gly201 and Asn277–Pro304. The interaction with DYNLL1/PIN stretch occupies residues Gln164 to Asp246. A compositionally biased stretch (polar residues) spans Gly290–Pro300. Ser340 is a (6R)-L-erythro-5,6,7,8-tetrahydrobiopterin binding site. A heme b-binding site is contributed by Cys421. Residues Gln484, Trp593, Tyr594, and Glu598 each coordinate L-arginine. Positions 683, 684, and 697 each coordinate (6R)-L-erythro-5,6,7,8-tetrahydrobiopterin. Tyr712 lines the heme b pocket. The segment at Lys731–Met751 is calmodulin-binding. The 181-residue stretch at Ala761 to Phe941 folds into the Flavodoxin-like domain. FMN contacts are provided by Thr767, Glu768, Thr769, Lys771, Ser772, Ser813, Thr814, and Gly818. Residues Ser853, Ser863, and Ser864 each carry the phosphoserine modification. The FMN site is built by Ser892, His897, Cys899, Glu925, and Gln929. Residues Lys996–Pro1243 enclose the FAD-binding FR-type domain. Arg1016 lines the NADP(+) pocket. Residues His1038, Arg1179, Tyr1180, Tyr1181, Ser1182, Thr1197, and Ala1199 each contribute to the FAD site. NADP(+) is bound at residue Ser1202. Positions 1203, 1216, 1217, and 1218 each coordinate FAD. Residues Thr1257, Arg1290, Ser1319, Arg1320, Lys1326, Tyr1328, Gln1330, Asp1363, Thr1404, and Arg1406 each contribute to the NADP(+) site.

Belongs to the NOS family. As to quaternary structure, homodimer. Interacts with DLG4; the interaction possibly being prevented by the association between NOS1 and CAPON. Forms a ternary complex with CAPON and RASD1. Forms a ternary complex with CAPON and SYN1. Interacts with ZDHHC23. Interacts with NOSIP; which may impair its synaptic location. Interacts with HTR4. Interacts with SLC6A4. Interacts with VAC14. Interacts (via N-terminal domain) with DLG4 (via N-terminal tandem pair of PDZ domains). Interacts with SLC6A4. Forms a complex with ASL, ASS1 and SLC7A1; the complex regulates cell-autonomous L-arginine synthesis and citrulline recycling while channeling extracellular L-arginine to nitric oxide synthesis pathway. Interacts with DMD; localizes NOS1 to sarcolemma in muscle cells. Interacts with DYNLL1; inhibits the nitric oxide synthase activity. Requires heme b as cofactor. FAD serves as cofactor. FMN is required as a cofactor. It depends on (6R)-L-erythro-5,6,7,8-tetrahydrobiopterin as a cofactor. In terms of processing, ubiquitinated; mediated by STUB1/CHIP in the presence of Hsp70 and Hsp40 (in vitro).

The protein localises to the cell membrane. The protein resides in the sarcolemma. Its subcellular location is the cell projection. It is found in the dendritic spine. The catalysed reaction is 2 L-arginine + 3 NADPH + 4 O2 + H(+) = 2 L-citrulline + 2 nitric oxide + 3 NADP(+) + 4 H2O. Its activity is regulated as follows. Stimulated by calcium/calmodulin. Inhibited by DYNLL1 that prevents the dimerization of the protein. Inhibited by NOSIP. Produces nitric oxide (NO) which is a messenger molecule with diverse functions throughout the body. In the brain and peripheral nervous system, NO displays many properties of a neurotransmitter. Probably has nitrosylase activity and mediates cysteine S-nitrosylation of cytoplasmic target proteins such SRR. This chain is Nitric oxide synthase 1 (NOS1), found in Oryctolagus cuniculus (Rabbit).